We begin with the raw amino-acid sequence, 125 residues long: Holo-[acyl-carrier-protein] synthase (125 aa).

Residues aspartate 8 and glutamate 57 each contribute to the Mg(2+) site.

Belongs to the P-Pant transferase superfamily. AcpS family. It depends on Mg(2+) as a cofactor.

Its subcellular location is the cytoplasm. The enzyme catalyses apo-[ACP] + CoA = holo-[ACP] + adenosine 3',5'-bisphosphate + H(+). Its function is as follows. Transfers the 4'-phosphopantetheine moiety from coenzyme A to a Ser of acyl-carrier-protein. In Neisseria meningitidis serogroup A / serotype 4A (strain DSM 15465 / Z2491), this protein is Holo-[acyl-carrier-protein] synthase.